Here is a 610-residue protein sequence, read N- to C-terminus: MWLPLVLLLAVLLLAVLCKVYLGLFSGSSPNPFSEDVKRPPAPLVTDKEARKKVLKQAFSANQVPEKLDVVVIGSGFGGLAAAAILAKAGKRVLVLEQHTKAGGCCHTFGKNGLEFDTGIHYIGRMEEGSIGRFILDQITEGQLDWAPLSSPFDIMVLEGPNGRKEYPMYSGEKAYIQGLKEKFPQEEAIIDKYIKLVKVVSSGAPHAILLKFLPLPVVQLLDRCGLLTRFSPFLQASTQSLAEVLQQLGASSELQAVLSYIFPTYGVTPNHSAFSMHALLVNHYMKGGFYPRGGSSEIAFHTIPVIQRAGGAVLTKATVQSVLLDSAGKACGVSVKKGHELVNIYCPIVVSNAGLFNTYEHLLPGNARCLPGVKQQLGTVRPGLGMTSVFICLRGTKEDLHLPSTNYYVYYDTDMDQAMERYVSMPREEAAEHIPLLFFAFPSAKDPTWEDRFPGRSTMIMLIPTAYEWFEEWQAELKGKRGSDYETFKNSFVEASMSVVLKLFPQLEGKVESVTAGSPLTNQFYLAAPRGACYGADHDLGRLHPCVMASLRAQSPIPNLYLTGQDIFTCGLVGALQGALLCSSAILKRNLYSDLKNLDSRIRAQKKKN.

Residues M1–C18 form the signal peptide.

Belongs to the carotenoid/retinoid oxidoreductase family. CrtISO subfamily. It depends on NAD(+) as a cofactor. Requires NADP(+) as cofactor. FAD is required as a cofactor. As to expression, expressed in liver; expression positively correlates with obesity and liver steatosis. Expressed in adipose tissue; expression tends to be decreased in obese versus lean individuals.

It localises to the endoplasmic reticulum membrane. The enzyme catalyses all-trans-13,14-dihydroretinol + A = all-trans-retinol + AH2. Catalyzes the saturation of all-trans-retinol to all-trans-13,14-dihydroretinol. Does not exhibit any activity toward all-trans-retinoic acid, nor 9-cis, 11-cis or 13-cis-retinol isomers. May play a role in the metabolism of vitamin A. Independently of retinol conversion, may regulate liver metabolism upstream of MLXIPL/ChREBP. May play a role in adipocyte differentiation. The sequence is that of All-trans-retinol 13,14-reductase (RETSAT) from Homo sapiens (Human).